Here is a 348-residue protein sequence, read N- to C-terminus: D-alanine--D-alanine ligase (348 aa).

The ATP-grasp domain occupies 136 to 341 (KYLLQTVGIP…YSDLIEELIQ (206 aa)). 169–224 (EGSLIYPVFVKPANMGSSVGISKVENREELQEALEEAFRYDARAIVEQGIEAREIE) contacts ATP. Mg(2+) contacts are provided by aspartate 295, glutamate 308, and asparagine 310.

Belongs to the D-alanine--D-alanine ligase family. Mg(2+) serves as cofactor. It depends on Mn(2+) as a cofactor.

It localises to the cytoplasm. The enzyme catalyses 2 D-alanine + ATP = D-alanyl-D-alanine + ADP + phosphate + H(+). Its pathway is cell wall biogenesis; peptidoglycan biosynthesis. Its function is as follows. Cell wall formation. The protein is D-alanine--D-alanine ligase (ddl) of Enterococcus faecalis (strain ATCC 700802 / V583).